The primary structure comprises 271 residues: Solute carrier family 66 member 2 (271 aa).

3 helical membrane-spanning segments follow: residues 7–27, 49–69, and 72–92; these read GWLLVPLHQLVSWVAAGAMVF, FSTHVCLVLLVANILRILFWF, and HFESPLLWQSIVMILTMLLML. Positions 14-80 constitute a PQ-loop 1 domain; the sequence is HQLVSWVAAG…RHFESPLLWQ (67 aa). S110 carries the phosphoserine modification. 3 helical membrane-spanning segments follow: residues 145 to 165, 168 to 188, and 232 to 252; these read DYVQCVLAFTGVAGYITYLSI, ALFVETLGFLAVLTEAMLGVP, and VCGLLQVMVDLVILGQAYAFA. The PQ-loop 2 domain maps to 178 to 233; it reads AVLTEAMLGVPQLYRNYCHRSTEGMSLKMVLMWTSGDTFKTAYFLLNGAPLQFSVC.

The protein localises to the membrane. This is Solute carrier family 66 member 2 (Slc66a2) from Mus musculus (Mouse).